We begin with the raw amino-acid sequence, 940 residues long: Serine/threonine-protein phosphatase 1 regulatory subunit 10 (940 aa).

Positions 1–348 are interaction with TOX4; the sequence is MGSGPIDPKE…EPAPPSEAME (348 aa). Residues 73 to 147 enclose the TFIIS N-terminal domain; sequence KLLNNWLTYS…SDWMAVIRSQ (75 aa). Disordered stretches follow at residues 147 to 210, 248 to 270, 304 to 400, and 534 to 557; these read QSST…KFRS, NVAAPGDATPPAEKKYKPLNTTP, KIKK…KSVT, and VETLEPGGSGGSPDGAGGSKLPPV. Composition is skewed to basic and acidic residues over residues 153–166 and 174–196; these read AEKDKKKRKDEGKS and PLTEVKAETRAEEAPEKKREKPK. Lys-179 is covalently cross-linked (Glycyl lysine isopeptide (Lys-Gly) (interchain with G-Cter in SUMO2)). Residue Thr-256 is modified to Phosphothreonine. A Glycyl lysine isopeptide (Lys-Gly) (interchain with G-Cter in SUMO2) cross-link involves residue Lys-262. Ser-313 carries the phosphoserine modification. The span at 325–336 shows a compositional bias: low complexity; sequence KTSTEPSTAKPS. The necessary for interaction with PPP1CA stretch occupies residues 357–433; that stretch reads PPVEVPELMD…NKIKDFGEAA (77 aa). Ser-382 bears the Phosphoserine mark. The necessary for interaction with PPP1CC stretch occupies residues 393–408; the sequence is GRKRKSVTWPEEGKLR. The PP1-binding motif signature appears at 394 to 423; it reads RKRKSVTWPEEGKLREYFYFELDETERVNV. Position 398 is a phosphoserine; by PKA (Ser-398). The segment at 418–619 is interaction with WDR82; the sequence is TERVNVNKIK…IKQMLVPHGL (202 aa). The segment covering 540–551 has biased composition (gly residues); it reads GGSGGSPDGAGG. Ser-545 and Ser-591 each carry phosphoserine. The interval 617–905 is disordered; it reads HGLLGPGPIA…HDGGHSHGGD (289 aa). Residues 644 to 655 show a composition bias toward pro residues; the sequence is PPGPGGPMPGPH. Omega-N-methylarginine is present on Arg-665. The segment covering 676 to 690 has biased composition (low complexity); that stretch reads GDPFWDGPGDPMRGG. Residues Arg-693 and Arg-738 each carry the omega-N-methylarginine modification. Gly residues-rich tracts occupy residues 725–763 and 789–844; these read ARGGRSGGGPPNGRGGPGGGMVGGGGHRPHEGPGGGMGN and GSMG…GSGG. Composition is skewed to basic and acidic residues over residues 861 to 886 and 894 to 903; these read PHDVPGHRGHDHRGPPPHEHRGHDGP and RGHDGGHSHG. Residues 906–934 form a C3H1-type zinc finger; that stretch reads MSNRPVCRHFMMKGNCRYENNCAFYHPGV.

As to quaternary structure, component of the PNUTS-PP1 complex (also named PTW/PP1 complex), composed of PPP1R10/PNUTS, TOX4, WDR82, and PPP1CA (or PPP1CB or PPP1CC). Post-translationally, phosphorylated on Ser-398 by PKA within the region necessary for interaction with PPP1CA.

Its subcellular location is the nucleus. It localises to the chromosome. Substrate-recognition component of the PNUTS-PP1 protein phosphatase complex, a protein phosphatase 1 (PP1) complex that promotes RNA polymerase II transcription pause-release, allowing transcription elongation. Promoter-proximal pausing by RNA polymerase II is a transcription halt following transcription initiation but prior to elongation, which acts as a checkpoint to control that transcripts are favorably configured for transcriptional elongation. The PNUTS-PP1 complex mediates the release of RNA polymerase II from promoter-proximal region of genes by catalyzing dephosphorylation of proteins involved in transcription, such as AFF4, CDK9, MEPCE, INTS12, NCBP1, POLR2M/GDOWN1 and SUPT6H. The PNUTS-PP1 complex also regulates RNA polymerase II transcription termination by mediating dephosphorylation of SUPT5H in termination zones downstream of poly(A) sites, thereby promoting deceleration of RNA polymerase II transcription. PNUTS-PP1 complex is also involved in the response to replication stress by mediating dephosphorylation of POLR2A at 'Ser-5' of the CTD, promoting RNA polymerase II degradation. The PNUTS-PP1 complex also plays a role in the control of chromatin structure and cell cycle progression during the transition from mitosis into interphase. PNUTS-PP1 complex mediates dephosphorylation of MYC, promoting MYC stability by preventing MYC ubiquitination by the SCF(FBXW7) complex. In addition to acts as a substrate-recognition component, PPP1R10/PNUTS also acts as a nuclear targeting subunit for the PNUTS-PP1 complex. In some context, PPP1R10/PNUTS also acts as an inhibitor of protein phosphatase 1 (PP1) activity by preventing access to substrates, such as RB. This chain is Serine/threonine-protein phosphatase 1 regulatory subunit 10 (PPP1R10), found in Pan troglodytes (Chimpanzee).